A 111-amino-acid polypeptide reads, in one-letter code: MSRQNLEEIIQTGIADTELSTEISTAIKRPRKYKVLLLNDDYTPMDFVVEVLKHFFHLNEEVAIQVMLQVHFQGKGVCGVFTRDIAETKVALVNEYARMNQHPLLSSMEPE.

This sequence belongs to the ClpS family. In terms of assembly, binds to the N-terminal domain of the chaperone ClpA.

Involved in the modulation of the specificity of the ClpAP-mediated ATP-dependent protein degradation. The polypeptide is ATP-dependent Clp protease adapter protein ClpS (Legionella pneumophila (strain Corby)).